The sequence spans 211 residues: Probable GTP-binding protein EngB (211 aa).

The 175-residue stretch at 26–200 (SGIEIAFAGR…RQKLDDWFAA (175 aa)) folds into the EngB-type G domain. GTP-binding positions include 34 to 41 (GRSNAGKS), 61 to 65 (GRTRL), 79 to 82 (DLPG), 146 to 149 (TKAD), and 179 to 181 (FSS). Mg(2+) is bound by residues S41 and T63.

Belongs to the TRAFAC class TrmE-Era-EngA-EngB-Septin-like GTPase superfamily. EngB GTPase family. Requires Mg(2+) as cofactor.

Functionally, necessary for normal cell division and for the maintenance of normal septation. This chain is Probable GTP-binding protein EngB, found in Sodalis glossinidius (strain morsitans).